The following is a 64-amino-acid chain: PYLa/PGLa A (64 aa).

The first 20 residues, 1 to 20, serve as a signal peptide directing secretion; it reads MYKQIFLCLIIAALCATIMA. Positions 21 to 35 are excised as a propeptide; that stretch reads EASAFADADEDDDKR. Residue Leu59 is modified to Leucine amide. A propeptide spanning residues 60-64 is cleaved from the precursor; the sequence is GRRDS.

This sequence belongs to the gastrin/cholecystokinin family. Magainin subfamily. Expressed by the skin glands. Synthesized in the stomach and stored in a novel granular multinucleated cell in the gastric mucosa. Stored as active, processed peptides in large granules within the granular gland secretions of the skin.

The protein resides in the secreted. Its function is as follows. PGLa and PGLa-H display a broad-spectrum of antibacterial activity against a range of Gram-positive and Gram-negative bacteria. PGLa also displays antifungal activity against C.albicans ATCC 14053. PGLa-H shows moderate antibacterial activity against the multidrug-resistant methicillin-resistant S.aureus (MRSA) but exhibits very little hemolytic activity. The sequence is that of PYLa/PGLa A (pgla-a) from Xenopus laevis (African clawed frog).